The sequence spans 410 residues: Exopolygalacturonase (410 aa).

The first 22 residues, 1–22 (MACIDNAMRALFLLALFCVVHG), serve as a signal peptide directing secretion. N-linked (GlcNAc...) asparagine glycosylation is found at Asn-89 and Asn-201. PbH1 repeat units lie at residues 192–218 (CKDMLIKDVNVTAPGDSPNTDGIHMGD), 219–240 (SSGVTITNTVIGVGDDCISIGP), 242–262 (TSKVNITGVTCGPGHGISIGS), 272–293 (VTDINVKDCTLKKTANGVRIKA), and 337–377 (ASKV…TMDD). Asp-233 serves as the catalytic Proton donor. Residues Cys-235 and Cys-252 are joined by a disulfide bond. Asn-246 is a glycosylation site (N-linked (GlcNAc...) asparagine). The active site involves His-256. Residue Asn-349 is glycosylated (N-linked (GlcNAc...) asparagine). Cys-364 and Cys-370 are disulfide-bonded. A glycan (N-linked (GlcNAc...) asparagine) is linked at Asn-387. Cysteines 393 and 409 form a disulfide.

Belongs to the glycosyl hydrolase 28 family. In terms of tissue distribution, pollen.

It localises to the secreted. The protein localises to the cell wall. It catalyses the reaction [(1-&gt;4)-alpha-D-galacturonosyl](n) + H2O = alpha-D-galacturonate + [(1-&gt;4)-alpha-D-galacturonosyl](n-1). Its function is as follows. May function in depolymerizing pectin during pollen development, germination, and tube growth. Acts as an exo-polygalacturonase. The protein is Exopolygalacturonase (PG2C) of Zea mays (Maize).